Here is a 466-residue protein sequence, read N- to C-terminus: Putative transcription factor bHLH041 (466 aa).

Disordered regions lie at residues 108-129, 194-213, and 260-289; these read PANS…SLSP, LTGP…KGRA, and RENA…TQLQ. Residues 120–129 show a composition bias toward low complexity; it reads PSSSSSSLSP. Positions 268–279 are enriched in gly residues; it reads EGSGGSGGGGRY. The region spanning 285–334 is the bHLH domain; sequence ATQLQHMISERKRREKLNESFQALRSLLPPGTKKDKASVLSIAREQLSSL.

In terms of assembly, homodimer.

It is found in the nucleus. This chain is Putative transcription factor bHLH041 (BHLH41), found in Arabidopsis thaliana (Mouse-ear cress).